A 285-amino-acid chain; its full sequence is Ribosomal RNA small subunit methyltransferase A (285 aa).

S-adenosyl-L-methionine is bound by residues Asn-11, Leu-13, Gly-37, Glu-57, Asp-85, and Asn-105.

It belongs to the class I-like SAM-binding methyltransferase superfamily. rRNA adenine N(6)-methyltransferase family. RsmA subfamily.

It localises to the cytoplasm. It carries out the reaction adenosine(1518)/adenosine(1519) in 16S rRNA + 4 S-adenosyl-L-methionine = N(6)-dimethyladenosine(1518)/N(6)-dimethyladenosine(1519) in 16S rRNA + 4 S-adenosyl-L-homocysteine + 4 H(+). In terms of biological role, specifically dimethylates two adjacent adenosines (A1518 and A1519) in the loop of a conserved hairpin near the 3'-end of 16S rRNA in the 30S particle. May play a critical role in biogenesis of 30S subunits. In Campylobacter curvus (strain 525.92), this protein is Ribosomal RNA small subunit methyltransferase A.